Consider the following 387-residue polypeptide: Carbamoyl phosphate synthase small chain (387 aa).

The CPSase stretch occupies residues 1–189; the sequence is MIKSAILVLE…GLPEDKQEQD (189 aa). L-glutamine-binding residues include Ser-47, Gly-241, and Gly-243. The 188-residue stretch at 193–380 folds into the Glutamine amidotransferase type-1 domain; it reads HVVAYDFGAK…IELIEQYCQK (188 aa). The Nucleophile role is filled by Cys-269. 5 residues coordinate L-glutamine: Leu-270, Gln-273, Asn-311, Gly-313, and Phe-314. Active-site residues include His-353 and Glu-355.

This sequence belongs to the CarA family. In terms of assembly, composed of two chains; the small (or glutamine) chain promotes the hydrolysis of glutamine to ammonia, which is used by the large (or ammonia) chain to synthesize carbamoyl phosphate. Tetramer of heterodimers (alpha,beta)4.

It catalyses the reaction hydrogencarbonate + L-glutamine + 2 ATP + H2O = carbamoyl phosphate + L-glutamate + 2 ADP + phosphate + 2 H(+). The enzyme catalyses L-glutamine + H2O = L-glutamate + NH4(+). The protein operates within amino-acid biosynthesis; L-arginine biosynthesis; carbamoyl phosphate from bicarbonate: step 1/1. It functions in the pathway pyrimidine metabolism; UMP biosynthesis via de novo pathway; (S)-dihydroorotate from bicarbonate: step 1/3. Functionally, small subunit of the glutamine-dependent carbamoyl phosphate synthetase (CPSase). CPSase catalyzes the formation of carbamoyl phosphate from the ammonia moiety of glutamine, carbonate, and phosphate donated by ATP, constituting the first step of 2 biosynthetic pathways, one leading to arginine and/or urea and the other to pyrimidine nucleotides. The small subunit (glutamine amidotransferase) binds and cleaves glutamine to supply the large subunit with the substrate ammonia. The protein is Carbamoyl phosphate synthase small chain of Photorhabdus laumondii subsp. laumondii (strain DSM 15139 / CIP 105565 / TT01) (Photorhabdus luminescens subsp. laumondii).